Here is a 237-residue protein sequence, read N- to C-terminus: Early nodulin-like protein 1 (237 aa).

The signal sequence occupies residues 1-28; it reads MEASRRWPYAAWFMAVLGLVAVFSSSEA. A Phytocyanin domain is found at 29 to 134; that stretch reads YVFYAGGRDG…GQKLYIIVMA (106 aa). Asn-59 carries an N-linked (GlcNAc...) asparagine glycan. A disulfide bridge links Cys-85 with Cys-122. Residues 139-215 are disordered; that stretch reads KPSEAPEPAG…SLGAPPPTSG (77 aa). Low complexity-rich tracts occupy residues 140-152 and 201-215; these read PSEA…AAGP and MSRS…PTSG. Ser-206 carries the GPI-anchor amidated serine lipid modification. Positions 207 to 237 are cleaved as a propeptide — removed in mature form; sequence LGAPPPTSGAAGLAGVVASVVVGVLGALLMF.

This sequence belongs to the early nodulin-like (ENODL) family. In terms of tissue distribution, expressed ubiquitously. Accumulates particularly in reproductive tissues, especially in maturing seeds.

The protein resides in the vacuole. It is found in the aleurone grain membrane. May act as a carbohydrate transporter. The protein is Early nodulin-like protein 1 of Oryza sativa subsp. japonica (Rice).